A 212-amino-acid polypeptide reads, in one-letter code: Fibrillarin-like rRNA/tRNA 2'-O-methyltransferase (212 aa).

Residues 1 to 37 (MSEPNLPAGVERREIGGETRLATRGPPVYGEPTADGW) are disordered. S-adenosyl-L-methionine contacts are provided by residues 74–75 (TT), 90–91 (EF), 115–116 (DA), and 136–139 (DVAT).

The protein belongs to the methyltransferase superfamily. Fibrillarin family. As to quaternary structure, interacts with nop5. Component of box C/D small ribonucleoprotein (sRNP) particles that contain rpl7ae, FlpA and nop5, plus a guide RNA.

Functionally, involved in pre-rRNA and tRNA processing. Utilizes the methyl donor S-adenosyl-L-methionine to catalyze the site-specific 2'-hydroxyl methylation of ribose moieties in rRNA and tRNA. Site specificity is provided by a guide RNA that base pairs with the substrate. Methylation occurs at a characteristic distance from the sequence involved in base pairing with the guide RNA. The protein is Fibrillarin-like rRNA/tRNA 2'-O-methyltransferase of Halorubrum lacusprofundi (strain ATCC 49239 / DSM 5036 / JCM 8891 / ACAM 34).